A 545-amino-acid chain; its full sequence is Phenylalanine--tRNA ligase beta subunit (545 aa).

In terms of domain architecture, B5 spans 270–346; it reads LEPKERLLTT…KGYGYENIKV (77 aa). The Mg(2+) site is built by Asp324, Asp330, Glu333, and Asp334.

It belongs to the phenylalanyl-tRNA synthetase beta subunit family. Type 2 subfamily. As to quaternary structure, tetramer of two alpha and two beta subunits. It depends on Mg(2+) as a cofactor.

The protein localises to the cytoplasm. It carries out the reaction tRNA(Phe) + L-phenylalanine + ATP = L-phenylalanyl-tRNA(Phe) + AMP + diphosphate + H(+). The protein is Phenylalanine--tRNA ligase beta subunit of Methanosarcina acetivorans (strain ATCC 35395 / DSM 2834 / JCM 12185 / C2A).